Consider the following 275-residue polypeptide: 4-hydroxy-tetrahydrodipicolinate reductase (275 aa).

Residues 13–18 (GAAGKM) and 108–110 (GTT) each bind NAD(+). His-164 acts as the Proton donor/acceptor in catalysis. Residue His-165 participates in (S)-2,3,4,5-tetrahydrodipicolinate binding. Lys-168 acts as the Proton donor in catalysis. 174–175 (GT) is a (S)-2,3,4,5-tetrahydrodipicolinate binding site.

This sequence belongs to the DapB family.

It is found in the cytoplasm. It carries out the reaction (S)-2,3,4,5-tetrahydrodipicolinate + NAD(+) + H2O = (2S,4S)-4-hydroxy-2,3,4,5-tetrahydrodipicolinate + NADH + H(+). The enzyme catalyses (S)-2,3,4,5-tetrahydrodipicolinate + NADP(+) + H2O = (2S,4S)-4-hydroxy-2,3,4,5-tetrahydrodipicolinate + NADPH + H(+). The protein operates within amino-acid biosynthesis; L-lysine biosynthesis via DAP pathway; (S)-tetrahydrodipicolinate from L-aspartate: step 4/4. Functionally, catalyzes the conversion of 4-hydroxy-tetrahydrodipicolinate (HTPA) to tetrahydrodipicolinate. This chain is 4-hydroxy-tetrahydrodipicolinate reductase, found in Cyanothece sp. (strain PCC 7425 / ATCC 29141).